The primary structure comprises 156 residues: Ribosomal RNA large subunit methyltransferase H (156 aa).

S-adenosyl-L-methionine contacts are provided by residues Leu73, Gly104, and 123-128 (LSALTL).

This sequence belongs to the RNA methyltransferase RlmH family. Homodimer.

The protein resides in the cytoplasm. The catalysed reaction is pseudouridine(1915) in 23S rRNA + S-adenosyl-L-methionine = N(3)-methylpseudouridine(1915) in 23S rRNA + S-adenosyl-L-homocysteine + H(+). Specifically methylates the pseudouridine at position 1915 (m3Psi1915) in 23S rRNA. The protein is Ribosomal RNA large subunit methyltransferase H of Vibrio vulnificus (strain CMCP6).